Here is a 778-residue protein sequence, read N- to C-terminus: GRIP and coiled-coil domain-containing protein 1 (778 aa).

Residues 13–61 adopt a coiled-coil conformation; that stretch reads SKKDLLETIETQKKQLLQYQARLKDVVRAYKSLLKEKEALEASIKVLSV. Disordered stretches follow at residues 70–157, 186–208, and 617–638; these read SGVQ…MDKR, YLAD…EEER, and GRRS…DTAS. A compositionally biased stretch (basic and acidic residues) spans 83-93; that stretch reads VDDRCSTHSED. 2 stretches are compositionally biased toward low complexity: residues 94-109 and 133-152; these read STGT…SLTS and ASGS…SAGS. Positions 152–702 form a coiled coil; that stretch reads SEMDKRVHQL…EEGERHREEV (551 aa). Residues 716–766 form the GRIP domain; sequence QSREGANLEYLKNIIYRFLTLPDSLGRQQTLTAILTILHFSPEEKQVLMRL.

It is found in the cytoplasm. Its subcellular location is the golgi apparatus membrane. Functionally, probably involved in maintaining Golgi structure. This is GRIP and coiled-coil domain-containing protein 1 (Gcc1) from Mus musculus (Mouse).